The following is a 106-amino-acid chain: Urease subunit beta (106 aa).

The protein belongs to the urease beta subunit family. In terms of assembly, heterotrimer of UreA (gamma), UreB (beta) and UreC (alpha) subunits. Three heterotrimers associate to form the active enzyme.

It localises to the cytoplasm. The enzyme catalyses urea + 2 H2O + H(+) = hydrogencarbonate + 2 NH4(+). The protein operates within nitrogen metabolism; urea degradation; CO(2) and NH(3) from urea (urease route): step 1/1. The sequence is that of Urease subunit beta from Klebsiella pneumoniae (strain 342).